The sequence spans 182 residues: Cytidylate kinase (182 aa).

7-15 (GPPGSGKSS) serves as a coordination point for ATP.

The protein belongs to the cytidylate kinase family. Type 2 subfamily.

The protein localises to the cytoplasm. The catalysed reaction is CMP + ATP = CDP + ADP. It catalyses the reaction dCMP + ATP = dCDP + ADP. This chain is Cytidylate kinase (cmk), found in Sulfolobus acidocaldarius (strain ATCC 33909 / DSM 639 / JCM 8929 / NBRC 15157 / NCIMB 11770).